The following is a 142-amino-acid chain: Large ribosomal subunit protein uL13 (142 aa).

This sequence belongs to the universal ribosomal protein uL13 family. Part of the 50S ribosomal subunit.

Functionally, this protein is one of the early assembly proteins of the 50S ribosomal subunit, although it is not seen to bind rRNA by itself. It is important during the early stages of 50S assembly. The sequence is that of Large ribosomal subunit protein uL13 from Paraburkholderia phytofirmans (strain DSM 17436 / LMG 22146 / PsJN) (Burkholderia phytofirmans).